Here is a 186-residue protein sequence, read N- to C-terminus: Glutathione peroxidase 7 (186 aa).

Residues 1–18 (MVAAVATAWLLLWAAACA) form the signal peptide. Cys-56 is a catalytic residue.

This sequence belongs to the glutathione peroxidase family.

Its subcellular location is the secreted. The enzyme catalyses 2 glutathione + H2O2 = glutathione disulfide + 2 H2O. Its function is as follows. It protects esophageal epithelia from hydrogen peroxide-induced oxidative stress. It suppresses acidic bile acid-induced reactive oxygen species (ROS) and protects against oxidative DNA damage and double-strand breaks. The chain is Glutathione peroxidase 7 (Gpx7) from Mus musculus (Mouse).